Consider the following 255-residue polypeptide: NAD kinase (255 aa).

The active-site Proton acceptor is D44. NAD(+)-binding positions include 44–45, H49, 114–115, D144, A152, 155–160, and Q216; these read DG, NE, and SAYNLS.

This sequence belongs to the NAD kinase family. A divalent metal cation is required as a cofactor.

The protein resides in the cytoplasm. The catalysed reaction is NAD(+) + ATP = ADP + NADP(+) + H(+). Its function is as follows. Involved in the regulation of the intracellular balance of NAD and NADP, and is a key enzyme in the biosynthesis of NADP. Catalyzes specifically the phosphorylation on 2'-hydroxyl of the adenosine moiety of NAD to yield NADP. In Rickettsia typhi (strain ATCC VR-144 / Wilmington), this protein is NAD kinase.